The chain runs to 155 residues: Small ribosomal subunit protein uS7c (155 aa).

This sequence belongs to the universal ribosomal protein uS7 family. As to quaternary structure, part of the 30S ribosomal subunit.

It is found in the plastid. Its function is as follows. One of the primary rRNA binding proteins, it binds directly to 16S rRNA where it nucleates assembly of the head domain of the 30S subunit. This chain is Small ribosomal subunit protein uS7c (rps7), found in Aneura mirabilis (Parasitic liverwort).